A 349-amino-acid polypeptide reads, in one-letter code: MAELLAIKWDDNRDKLILLDQTILPNKIEYIEYDTAEDVYDSIKDMIVRGAPAIGVTAAYGLYFAAKVAPEDNFKNFFKYLKEKSAYLDSSRPTAVNLSWALKIMESKALENKDKDVKEIKSILREEAKRIHEEDIEICKAIGENLVTLLKDGVGILTHCNAGQLATSKYGTATSPMYLAKEKGWNFKVYSDETRPRLQGSTLTALELYEAGIDVTTITDNMAAMVMSQGKIDAVIVGCDRIAANGDTANKIGTMGVSILAKYFGIPMYIAAPTPSIDIDTKTGKDIPIEERNPEEVTSRFGVWTAPRGVKVYNPGFDVTPHENITAIVTEKGIVYPPFEENLKKLFEK.

Residues 49 to 51, Arg92, and Gln199 contribute to the substrate site; that span reads RGA. Asp240 (proton donor) is an active-site residue. 250 to 251 serves as a coordination point for substrate; the sequence is NK.

This sequence belongs to the EIF-2B alpha/beta/delta subunits family. DrdI subfamily.

It catalyses the reaction 5-deoxy-alpha-D-ribose 1-phosphate = 5-deoxy-D-ribulose 1-phosphate. The protein operates within carbohydrate degradation. In terms of biological role, catalyzes the isomerization of 5-deoxy-alpha-D-ribose 1-phosphate to 5-deoxy-D-ribulose 1-phosphate, as part of a 5-deoxyribose salvage pathway that recycles this toxic radical SAM enzyme by-product to mainstream metabolites. The chain is 5-deoxyribose 1-phosphate isomerase from Clostridium botulinum (strain Loch Maree / Type A3).